An 803-amino-acid polypeptide reads, in one-letter code: Lon protease (803 aa).

In terms of domain architecture, Lon N-terminal spans 9-202 (MPVLPLRDVV…YLLGMMESEA (194 aa)). 356 to 363 (GPPGVGKT) is an ATP binding site. Positions 592–773 (QNRIGEVTGL…DEVLGFALEN (182 aa)) constitute a Lon proteolytic domain. Active-site residues include Ser679 and Lys722.

This sequence belongs to the peptidase S16 family. As to quaternary structure, homohexamer. Organized in a ring with a central cavity.

It localises to the cytoplasm. It catalyses the reaction Hydrolysis of proteins in presence of ATP.. Functionally, ATP-dependent serine protease that mediates the selective degradation of mutant and abnormal proteins as well as certain short-lived regulatory proteins. Required for cellular homeostasis and for survival from DNA damage and developmental changes induced by stress. Degrades polypeptides processively to yield small peptide fragments that are 5 to 10 amino acids long. Binds to DNA in a double-stranded, site-specific manner. This Haemophilus influenzae (strain ATCC 51907 / DSM 11121 / KW20 / Rd) protein is Lon protease.